Reading from the N-terminus, the 98-residue chain is NADH-ubiquinone oxidoreductase chain 4L (98 aa).

3 helical membrane-spanning segments follow: residues methionine 1–isoleucine 21, serine 29–leucine 49, and valine 61–isoleucine 81.

This sequence belongs to the complex I subunit 4L family. Core subunit of respiratory chain NADH dehydrogenase (Complex I) which is composed of 45 different subunits.

It localises to the mitochondrion inner membrane. The enzyme catalyses a ubiquinone + NADH + 5 H(+)(in) = a ubiquinol + NAD(+) + 4 H(+)(out). Core subunit of the mitochondrial membrane respiratory chain NADH dehydrogenase (Complex I) which catalyzes electron transfer from NADH through the respiratory chain, using ubiquinone as an electron acceptor. Part of the enzyme membrane arm which is embedded in the lipid bilayer and involved in proton translocation. The sequence is that of NADH-ubiquinone oxidoreductase chain 4L (MT-ND4L) from Hylobates lar (Lar gibbon).